A 112-amino-acid chain; its full sequence is Lutropin subunit beta (112 aa).

6 disulfide bridges follow: cysteine 4/cysteine 52, cysteine 18/cysteine 67, cysteine 21/cysteine 105, cysteine 29/cysteine 83, cysteine 33/cysteine 85, and cysteine 88/cysteine 95. The N-linked (GlcNAc...) asparagine glycan is linked to asparagine 8.

It belongs to the glycoprotein hormones subunit beta family. As to quaternary structure, heterodimer of a common alpha chain and a unique beta chain which confers biological specificity to thyrotropin, lutropin, follitropin and gonadotropin.

It is found in the secreted. The sequence is that of Lutropin subunit beta (lhb) from Aquarana catesbeiana (American bullfrog).